Here is a 329-residue protein sequence, read N- to C-terminus: Cathepsin K (329 aa).

The first 15 residues, 1–15 (MWVFKFLLLPMVSFA), serve as a signal peptide directing secretion. Residues 16–114 (LSPEEMLDTQ…TLYTPEWEGR (99 aa)) constitute a propeptide, activation peptide. Residue N103 is glycosylated (N-linked (GlcNAc...) asparagine). 2 disulfide bridges follow: C136–C177 and C170–C210. The active site involves C139. A glycan (N-linked (GlcNAc...) asparagine) is linked at N213. Cysteines 269 and 318 form a disulfide. Active-site residues include H276 and N296.

Belongs to the peptidase C1 family. In terms of tissue distribution, predominantly expressed in bones. Expressed in thyroid epithelial cells.

The protein localises to the lysosome. It is found in the secreted. It localises to the apical cell membrane. It catalyses the reaction Broad proteolytic activity. With small-molecule substrates and inhibitors, the major determinant of specificity is P2, which is preferably Leu, Met &gt; Phe, and not Arg.. Functionally, thiol protease involved in osteoclastic bone resorption. Displays potent endoprotease activity against fibrinogen at acid pH. May play an important role in extracellular matrix degradation. Involved in the release of thyroid hormone thyroxine (T4) by limited proteolysis of TG/thyroglobulin in the thyroid follicle lumen. This chain is Cathepsin K (Ctsk), found in Mus musculus (Mouse).